The sequence spans 931 residues: Aconitate hydratase A (931 aa).

Residues 402 to 454 are disordered; the sequence is SASPVDEASAESFPASDAPAYGSQENGAGAPQHADGTGAAVPSNPVTVTAPDG. Positions 472, 538, and 541 each coordinate [4Fe-4S] cluster.

This sequence belongs to the aconitase/IPM isomerase family. It depends on [4Fe-4S] cluster as a cofactor.

It carries out the reaction citrate = D-threo-isocitrate. It catalyses the reaction citrate = cis-aconitate + H2O. The enzyme catalyses cis-aconitate + H2O = D-threo-isocitrate. It participates in carbohydrate metabolism; tricarboxylic acid cycle; isocitrate from oxaloacetate: step 2/2. Catalyzes the reversible isomerization of citrate to isocitrate via cis-aconitate in the tricarboxylic acid (TCA) cycle. Aconitase activity is important for the initiation of morphological and physiological differentiation of S.viridochromogenes. In addition, the apo form of AcnA (lacking the [4Fe-4S] cluster) functions as a RNA-binding regulatory protein, which binds to iron responsive elements (IREs) located on the untranslated region of certain mRNAs, including recA and ftsZ. Binding to IRE-like structures probably alters the target mRNA stability and regulates the protein amount. The apo form plays a regulatory role in oxidative stress response. In Streptomyces viridochromogenes (strain DSM 40736 / JCM 4977 / BCRC 1201 / Tue 494), this protein is Aconitate hydratase A.